A 491-amino-acid polypeptide reads, in one-letter code: Ketol-acid reductoisomerase (NADP(+)) (491 aa).

Residues 15–208 (AQLGKCRFMG…GGHRAGVLES (194 aa)) form the KARI N-terminal Rossmann domain. Residues 45–48 (CGAQ), Arg-68, Arg-76, Ser-78, and 108–110 (DKQ) contribute to the NADP(+) site. The active site involves His-132. Gly-158 contacts NADP(+). 2 consecutive KARI C-terminal knotted domains span residues 209–344 (SFVA…TAPQ) and 345–484 (YEGK…MTDM). Mg(2+) is bound by residues Asp-217, Glu-221, Glu-389, and Glu-393. Residue Ser-414 participates in substrate binding.

Belongs to the ketol-acid reductoisomerase family. Mg(2+) serves as cofactor.

It catalyses the reaction (2R)-2,3-dihydroxy-3-methylbutanoate + NADP(+) = (2S)-2-acetolactate + NADPH + H(+). It carries out the reaction (2R,3R)-2,3-dihydroxy-3-methylpentanoate + NADP(+) = (S)-2-ethyl-2-hydroxy-3-oxobutanoate + NADPH + H(+). It functions in the pathway amino-acid biosynthesis; L-isoleucine biosynthesis; L-isoleucine from 2-oxobutanoate: step 2/4. Its pathway is amino-acid biosynthesis; L-valine biosynthesis; L-valine from pyruvate: step 2/4. Functionally, involved in the biosynthesis of branched-chain amino acids (BCAA). Catalyzes an alkyl-migration followed by a ketol-acid reduction of (S)-2-acetolactate (S2AL) to yield (R)-2,3-dihydroxy-isovalerate. In the isomerase reaction, S2AL is rearranged via a Mg-dependent methyl migration to produce 3-hydroxy-3-methyl-2-ketobutyrate (HMKB). In the reductase reaction, this 2-ketoacid undergoes a metal-dependent reduction by NADPH to yield (R)-2,3-dihydroxy-isovalerate. The sequence is that of Ketol-acid reductoisomerase (NADP(+)) from Escherichia coli O7:K1 (strain IAI39 / ExPEC).